The chain runs to 953 residues: Zinc finger protein 507 (953 aa).

Position 95 is a phosphoserine (serine 95). C2H2-type zinc fingers lie at residues 125–147 (YQCSLCKFLSSSFSVLKDHIKQH), 155–185 (LMCSECHITSRSQEELEAHVVNDHDNDANIH), and 248–270 (YRCLFCSYTCGQQRMLKTHAWKH). Serine 427 carries the phosphoserine modification. The segment at 470–489 (KGLATDENAPPGRRRTNSES) is disordered. C2H2-type zinc fingers lie at residues 641-663 (YRCRLCHYTSGNKGYIKQHLRVH), 669-691 (YQCPICEHIADNSKDLESHMIHH), 697-720 (YQCKQCEESFHYKSQLRNHEREQH), 758-780 (YRCDVCDYTSTTYVGVRNHRRIH), and 786-808 (YRCSLCGYVCSHPPSLKSHMWKH). Residues 831 to 888 (GRVLGKSPGKTQLKSSEESADPVTGSSENAVSSSELMSQTPSEVLGTNENEKLSPTSN) are disordered. A compositionally biased stretch (polar residues) spans 854–888 (TGSSENAVSSSELMSQTPSEVLGTNENEKLSPTSN). Residues 911–933 (FCCCICGFESTSKENLLDHMKEH) form a C2H2-type 9 zinc finger.

This sequence belongs to the krueppel C2H2-type zinc-finger protein family.

The protein localises to the nucleus. Its function is as follows. May be involved in transcriptional regulation. This chain is Zinc finger protein 507 (ZNF507), found in Homo sapiens (Human).